A 489-amino-acid polypeptide reads, in one-letter code: Pre-glycoprotein polyprotein GP complex (489 aa).

Residue Gly-2 is the site of N-myristoyl glycine; by host attachment. Residues 2 to 17 (GQIVTFFQEVPHILEE) lie on the Extracellular side of the membrane. Residues 18–33 (VMNIVLMTLSILAILK) form a helical membrane-spanning segment. At 34–58 (GIYNVMTCGIIGLITFLFLCGRSCS) the chain is on the cytoplasmic side. Cys-57 is a Zn(2+) binding site. The Extracellular portion of the chain corresponds to 59–430 (SIYKDNYEFF…QSTTPLGLVD (372 aa)). 6 N-linked (GlcNAc...) asparagine; by host glycosylation sites follow: Asn-78, Asn-88, Asn-98, Asn-108, Asn-118, and Asn-166. 6 disulfide bridges follow: Cys-85–Cys-229, Cys-117–Cys-154, Cys-179–Cys-210, Cys-277–Cys-290, Cys-299–Cys-308, and Cys-362–Cys-383. An N-linked (GlcNAc...) asparagine; by host glycan is attached at Asn-222. Asn-363, Asn-371, Asn-388, and Asn-393 each carry an N-linked (GlcNAc...) asparagine; by host glycan. A helical membrane pass occupies residues 431-451 (LFVFSTSFYLISVFLHLIKIP). At 452–489 (THRHIKGKPCPKPHRLNHMAICSCGFYKQPGLPTQWKR) the chain is on the cytoplasmic side. Residues His-453, His-455, Cys-461, His-465, Cys-473, and Cys-475 each coordinate Zn(2+).

This sequence belongs to the arenaviridae GPC protein family. In terms of assembly, interacts with glycoprotein G2. Part of the GP complex (GP-C) together with glycoprotein G1 and glycoprotein G2. The GP-complex interacts with protein Z, which interacts with ribonucleocapsid; these interactions may induce virion budding. Homotrimer; disulfide-linked. In pre-fusion state, G1 homotrimers bind G2 homotrimers via ionic interactions. Part of the GP complex (GP-C) together with glycoprotein G2 and the stable signal peptide. The GP-complex interacts with protein Z, which interacts with ribonucleocapsid; these interactions may induce virion budding. As to quaternary structure, homotrimer. Interacts with the stable signal peptide. In pre-fusion state, G2 homotrimers bind G1 homotrimers via ionic interactions. Part of the GP complex (GP-C) together with glycoprotein G1 and the stable signal peptide. Acidification in the endosome triggers rearrangements, which ultimately leads to a 6 helix bundle formed by the two heptad repeat domains (HR1 and HR2) in post-fusion state. The GP-complex interacts with protein Z, which interacts with ribonucleocapsid; these interactions may induce virion budding. Post-translationally, specific enzymatic cleavages in vivo yield mature proteins. GP-C polyprotein is cleaved in the endoplasmic reticulum by the host protease MBTPS1. Only cleaved glycoprotein is incorporated into virions. In terms of processing, the SSP remains stably associated with the GP complex following cleavage by signal peptidase and plays crucial roles in the trafficking of GP through the secretory pathway. Myristoylation is necessary for GP2-mediated fusion activity.

It is found in the virion membrane. Its subcellular location is the host endoplasmic reticulum membrane. It localises to the host Golgi apparatus membrane. The protein resides in the host cell membrane. Its function is as follows. Functions as a cleaved signal peptide that is retained as the third component of the GP complex (GP-C). Helps to stabilize the spike complex in its native conformation. The SSP is required for efficient glycoprotein expression, post-translational maturation cleavage of G1 and G2, glycoprotein transport to the cell surface plasma membrane, formation of infectious virus particles, and acid pH-dependent glycoprotein-mediated cell fusion. Functionally, forms the virion spikes together with glycoprotein G2. The glycoprotein spike trimers are connected to the underlying matrix. Interacts with the host receptor leading to virus endocytosis. Forms the virion spikes together with glycoprotein G1. The glycoprotein spike trimers are connected to the underlying matrix. Class I viral fusion protein that directs fusion of viral and host endosomal membranes, leading to delivery of the nucleocapsid into the cytoplasm. Membrane fusion is mediated by irreversible conformational changes induced by acidification. This chain is Pre-glycoprotein polyprotein GP complex, found in Mastomys natalensis (African soft-furred rat).